A 118-amino-acid polypeptide reads, in one-letter code: Large ribosomal subunit protein uL18 (118 aa).

The span at 1–10 shows a compositional bias: basic and acidic residues; it reads MKTTRRDATR. The disordered stretch occupies residues 1 to 20; the sequence is MKTTRRDATRSRHQRVRRKV. Residues 11–20 are compositionally biased toward basic residues; sequence SRHQRVRRKV.

Belongs to the universal ribosomal protein uL18 family. As to quaternary structure, part of the 50S ribosomal subunit; part of the 5S rRNA/L5/L18/L25 subcomplex. Contacts the 5S and 23S rRNAs.

This is one of the proteins that bind and probably mediate the attachment of the 5S RNA into the large ribosomal subunit, where it forms part of the central protuberance. This Acaryochloris marina (strain MBIC 11017) protein is Large ribosomal subunit protein uL18.